A 305-amino-acid chain; its full sequence is Putative monooxygenase p33MONOX (305 aa).

Residues 37-56 (LEDPAPMTPPPSDMGSVPWK) are disordered. Thr44 carries the phosphothreonine modification. Residues 67-77 (LAKVEEGEASL) carry the Flavin-containing monooxygenase motif motif. Disordered regions lie at residues 158 to 236 (QSGE…KYDS) and 259 to 305 (QANR…PTGF). The span at 169–183 (PASAQSTPSTTPHSS) shows a compositional bias: low complexity. Position 175 is a phosphothreonine (Thr175). 2 positions are modified to phosphoserine: Ser182 and Ser183. Positions 193–210 (TSGSSTALPGPNPSTMDS) are enriched in polar residues.

This sequence belongs to the P33MONOX family. In terms of assembly, interacts with NELFB, NOL12 and PRNP. In terms of tissue distribution, down-regulated in the occipital lobe of an early stage Alzheimer disease patients.

Its subcellular location is the cytoplasm. In terms of biological role, potential NADPH-dependent oxidoreductase. May be involved in the regulation of neuronal survival, differentiation and axonal outgrowth. This chain is Putative monooxygenase p33MONOX (KIAA1191), found in Homo sapiens (Human).